We begin with the raw amino-acid sequence, 1524 residues long: DNA-directed RNA polymerase subunit beta' (1524 aa).

The Zn(2+) site is built by Cys58, Cys60, Cys73, and Cys76. Mg(2+) contacts are provided by Asp739, Asp741, and Asp743. Zn(2+) contacts are provided by Cys1112, Cys1194, Cys1201, and Cys1204. The tract at residues 1501 to 1524 (EAVEAKERPAARRGVKREQPGKQA) is disordered.

It belongs to the RNA polymerase beta' chain family. In terms of assembly, the RNAP catalytic core consists of 2 alpha, 1 beta, 1 beta' and 1 omega subunit. When a sigma factor is associated with the core the holoenzyme is formed, which can initiate transcription. Requires Mg(2+) as cofactor. Zn(2+) is required as a cofactor.

It carries out the reaction RNA(n) + a ribonucleoside 5'-triphosphate = RNA(n+1) + diphosphate. Its function is as follows. DNA-dependent RNA polymerase catalyzes the transcription of DNA into RNA using the four ribonucleoside triphosphates as substrates. The polypeptide is DNA-directed RNA polymerase subunit beta' (Thermus thermophilus (strain ATCC BAA-163 / DSM 7039 / HB27)).